Reading from the N-terminus, the 890-residue chain is Wolframin (890 aa).

Residue Met1 is modified to N-acetylmethionine. Positions 1-86 (MDSNTAPLGP…TGPTKGDMEI (86 aa)) are disordered. Residues 1-321 (MDSNTAPLGP…MHWLSTIIPT (321 aa)) are interaction with ATP6V1A. Pro residues predominate over residues 10 to 20 (PSCPQPPPAPQ). Thr30 carries the phosphothreonine; by FAM20C modification. Residue Ser32 is modified to Phosphoserine; by FAM20C. At Ser157 the chain carries Phosphoserine. 10 helical membrane passes run 314-334 (WLSTIIPTHHINALIFFFIVS), 340-360 (FFAFFIPLVIFYLSFISMVIC), 402-422 (LEPYAHFLLSVFFVIFSFPIA), 427-447 (IPCSELAVITGFFTVTSYLSL), 465-485 (AGLLSLLPSMPLNWPYLKVLG), 496-516 (LVVLNVSVPCLLYVYLLYLFF), 529-549 (CYLVPYLVCFMWCELSVVILL), 563-583 (YFLFLFALPILVAGLALVGVL), 589-609 (FTSLELTKIAVTVAVCSVPLL), and 632-652 (MVKLILVWLTAIVLFCWFYVY). Residues 653-869 (RSEGMKVYNS…HVKIEHDWRS (217 aa)) lie on the Lumenal side of the membrane. N-linked (GlcNAc...) asparagine glycans are attached at residues Asn661 and Asn746. Residues 870-890 (TVHGAVKFAFDFFFFPFLSAA) form a helical membrane-spanning segment.

In terms of assembly, interacts with ATP6V1A. In terms of tissue distribution, highly expressed in heart followed by brain, placenta, lung and pancreas. Weakly expressed in liver, kidney and skeletal muscle. Also expressed in islet and beta-cell insulinoma cell line.

It is found in the endoplasmic reticulum membrane. The protein resides in the cytoplasmic vesicle. It localises to the secretory vesicle. Participates in the regulation of cellular Ca(2+) homeostasis, at least partly, by modulating the filling state of the endoplasmic reticulum Ca(2+) store. Negatively regulates the ER stress response and positively regulates the stability of V-ATPase subunits ATP6V1A and ATP1B1 by preventing their degradation through an unknown proteasome-independent mechanism. The chain is Wolframin (WFS1) from Homo sapiens (Human).